The chain runs to 816 residues: Probable disease resistance protein At4g33300 (816 aa).

One can recognise an RPW8 domain in the interval 1-149 (MAITDFFAGE…SLDRVIQQVG (149 aa)). Residues 95-111 (TLARKMEKLEKTISNFL) adopt a coiled-coil conformation. One can recognise an NB-ARC domain in the interval 191-443 (VKKMMFESQG…LDVLINIWIE (253 aa)). 207-214 (GMGGVGKT) is an ATP binding site. Positions 399-415 (SRLLRQMEASLDNLDQT) form a coiled coil. LRR repeat units lie at residues 681 to 704 (SLSC…SKLQ), 705 to 727 (ALEI…ICEL), 729 to 751 (GLKY…IGKL), and 753 to 774 (KLEK…AVSL).

Belongs to the disease resistance NB-LRR family.

Functionally, probable disease resistance protein. The chain is Probable disease resistance protein At4g33300 from Arabidopsis thaliana (Mouse-ear cress).